The following is a 230-amino-acid chain: Flavin-dependent thymidylate synthase (230 aa).

In terms of domain architecture, ThyX spans 1–217 (MEIKVLEKGF…PVTYEAFLNF (217 aa)). Residues S55, 78–80 (RHR), and E86 contribute to the FAD site. DUMP is bound by residues 75–78 (QLVR), 86–90 (ERSGR), and R156. The ThyX motif motif lies at 78–88 (RHRIASINERS). FAD is bound by residues 172 to 174 (NAR) and N178. R183 lines the dUMP pocket. The active-site Involved in ionization of N3 of dUMP, leading to its activation is the R183.

This sequence belongs to the thymidylate synthase ThyX family. Homotetramer. FAD serves as cofactor.

It carries out the reaction dUMP + (6R)-5,10-methylene-5,6,7,8-tetrahydrofolate + NADPH + H(+) = dTMP + (6S)-5,6,7,8-tetrahydrofolate + NADP(+). It participates in pyrimidine metabolism; dTTP biosynthesis. In terms of biological role, catalyzes the reductive methylation of 2'-deoxyuridine-5'-monophosphate (dUMP) to 2'-deoxythymidine-5'-monophosphate (dTMP) while utilizing 5,10-methylenetetrahydrofolate (mTHF) as the methyl donor, and NADPH and FADH(2) as the reductant. This Kosmotoga olearia (strain ATCC BAA-1733 / DSM 21960 / TBF 19.5.1) protein is Flavin-dependent thymidylate synthase.